The chain runs to 188 residues: MTEWRQQWQAILHEFRKQAPLGRGDVVVIGCSTSEVLGERIGTAGSMDVAAMLFAELDAWRRETGIALAFQCCEHLNRALVVERETAKTHGLEIVSVVPVPKAGGAMAAYAYRKFADPVVVEAIRADAGIDIGHTLIGMHLKPVAVPVRVSVKHIGSACVTLAKTRPKLIGGARAVYSLENPNDSCSF.

Belongs to the UPF0340 family.

The polypeptide is UPF0340 protein GK3370 (Geobacillus kaustophilus (strain HTA426)).